The sequence spans 2620 residues: Ankyrin repeat and KH domain-containing protein mask-1 (2620 aa).

ANK repeat units lie at residues 254–283, 288–318, 361–390, 402–431, 437–466, 470–502, 507–536, 538–566, 568–597, 600–629, 634–663, and 667–697; these read SKIT…DPNV, NCNT…KKPD, ERDS…KNPP, ERYS…PADL, IEPS…KIEE, KKNT…EVDV, TGDT…DLTA, KTSP…TIPQ, QLSR…DLNF, DERT…SVNF, NDAT…DPML, and DGVN…NMPM. Disordered stretches follow at residues 699 to 726, 994 to 1032, and 1192 to 1229; these read KDPP…SGQD, HQEE…QPGA, and SLMA…AIDK. Over residues 1012-1029 the composition is skewed to polar residues; sequence TSLTAPNPADTSDVTTKQ. A compositionally biased stretch (low complexity) spans 1192–1206; sequence SLMAKSVQSQQQQGQ. A compositionally biased stretch (basic and acidic residues) spans 1210 to 1221; sequence THSEGDGAERAK. ANK repeat units follow at residues 1234–1263, 1267–1296, 1301–1330, 1334–1363, 1369–1398, 1403–1432, 1436–1465, 1471–1500, 1504–1533, and 1537–1566; these read TLET…NIEH, KGFS…AIEA, TKDT…NKEH, SDYT…EINS, LGIS…DINA, NRNT…NVEH, TGLT…DTNA, TKDT…AVDV, KGCT…DPDM, and RKIS…QFPN. Positions 1596–1648 form a coiled coil; sequence AKKAQAESAELAAQKLLELIDEEKVQKEVKKQKQKDKKIKKKEEKKIKKQEAE. Disordered stretches follow at residues 1621–1720 and 1759–1804; these read QKEV…AEEP and KEGK…EIDT. Residues 1636 to 1647 are compositionally biased toward basic and acidic residues; the sequence is KKEEKKIKKQEA. Acidic residues predominate over residues 1648–1661; that stretch reads EPEPEPEPEPEPVP. 2 stretches are compositionally biased toward low complexity: residues 1665 to 1681 and 1769 to 1791; these read PVVI…IVVE and KSGY…TTSS. The KH domain maps to 1807 to 1873; it reads ESSWKLTIPA…EMVRYAMNII (67 aa). Positions 1899–1913 are enriched in polar residues; it reads ASSFSSEGTSKSAVD. Disordered regions lie at residues 1899-1962, 1976-2010, 2067-2143, 2267-2294, 2307-2343, 2372-2391, 2429-2448, and 2496-2620; these read ASSF…GNVW, LMET…QASE, SVQS…QTQN, NATS…VTTG, SFAP…QQQQ, QHQS…KFSM, QESS…NSYY, and QKKQ…SSNW. A compositionally biased stretch (low complexity) spans 1917–1946; sequence APSSIPKSLSSASIARQSASPIPQQSSQRS. Residues 1982–1993 are compositionally biased toward polar residues; it reads ISQSPKQAPQIP. Low complexity-rich tracts occupy residues 1994–2006, 2067–2078, and 2100–2118; these read STQQ…SRQD, SVQSVQHMQQQQ, and SQPI…SSFS. Composition is skewed to polar residues over residues 2267 to 2286 and 2325 to 2339; these read NATS…VQQP and RSQS…STNI. The span at 2505–2528 shows a compositional bias: polar residues; the sequence is SFMHNSQQPQPFGAPSNASANQSR. Over residues 2535 to 2547 the composition is skewed to pro residues; the sequence is RPQPPPFVAPQAP. The segment covering 2552–2565 has biased composition (polar residues); the sequence is SLGNASSTTNPSRT. 2 stretches are compositionally biased toward low complexity: residues 2566 to 2588 and 2597 to 2620; these read SMQQ…QMPQ and QQQQ…SSNW.

This sequence belongs to the mask family.

The protein localises to the cytoplasm. The polypeptide is Ankyrin repeat and KH domain-containing protein mask-1 (Caenorhabditis elegans).